Here is a 313-residue protein sequence, read N- to C-terminus: Sideroflexin-4 (313 aa).

The next 2 helical transmembrane spans lie at 87 to 107 (AAFL…DTGI) and 141 to 161 (TLLG…PHLF). The residue at position 173 (Lys173) is an N6-acetyllysine. The next 3 membrane-spanning stretches (helical) occupy residues 175–191 (TLPI…NVFA), 230–247 (AVLF…IHIF), and 269–289 (FFMM…IGQI).

Belongs to the sideroflexin family. In terms of tissue distribution, largely restricted to kidney, brain and heart.

The protein localises to the mitochondrion inner membrane. Functionally, mitochondrial amino-acid transporter. Does not act as a serine transporter: not able to mediate transport of serine into mitochondria. The sequence is that of Sideroflexin-4 from Mus musculus (Mouse).